Reading from the N-terminus, the 501-residue chain is MLQRLEQLQMQTSNILKELHSTSIFTDSTTSQLHNGGENSVMDTEESSAIDKLSASLQQVNISSPSVPTSQSRVTQGQSLGNTQISNPTSKTNNVRAKARNIRNPSQRLRPSTSLARLSNNAPRIPKEASLHENSISSKESPSVTTSKHVATITKPSTSSIARMSSNARIAAIPRAKSSMAVRSPSRLGNGPNVRSPKVGFNAKSDDSPVVKSPGSNDKPSASPRISVRSLGNSSVVRPPTRTSTTRPLSRVNVTNASGSISKNSTSPSKVKVNASTKIVRPVSAAQTVRPGSRIFRENSASNTQRPNVSATSNSTVRVASSLAVRPVSRNAQARTPSRLEQREVNVKNSSAKIVRPGTSLGVRSPSRIQSTLSSRTTTGNVRTKAANIVRPSSSINRRPPSSINQRPPSNLRILAPSRSRATIHERPSSSILHRHAHSLTSSSFSTKTLATTKEIQNSPTLVESSTVVHHDPSYLQNQTSEINDTNHSSHSSPLDLNRMI.

Composition is skewed to polar residues over residues 61–95 (NISS…TNNV), 103–122 (RNPS…SNNA), and 132–168 (HENS…SSNA). Disordered stretches follow at residues 61–274 (NISS…VKVN), 328–381 (VSRN…TTGN), and 478–501 (NQTS…NRMI). The span at 234–252 (SSVVRPPTRTSTTRPLSRV) shows a compositional bias: low complexity. Composition is skewed to polar residues over residues 253–274 (NVTN…VKVN), 367–381 (SRIQ…TTGN), and 478–495 (NQTS…SSPL).

Its subcellular location is the cytoplasm. The protein resides in the cytoskeleton. Functionally, involved in the cell polarity process and in regulation of microtubule growth. Has a role in meiosis. Involved in microtubule dynamics. Binds to mitochondria and microtubules, attaching the tubular mitochondria to the microtubule lattice at multiple discrete interaction sites. The chain is Microtubule-associated protein mmb1 from Schizosaccharomyces pombe (strain 972 / ATCC 24843) (Fission yeast).